The primary structure comprises 93 residues: Pyrimidine/purine nucleoside phosphorylase (93 aa).

The protein belongs to the nucleoside phosphorylase PpnP family.

It catalyses the reaction a purine D-ribonucleoside + phosphate = a purine nucleobase + alpha-D-ribose 1-phosphate. The enzyme catalyses adenosine + phosphate = alpha-D-ribose 1-phosphate + adenine. It carries out the reaction cytidine + phosphate = cytosine + alpha-D-ribose 1-phosphate. The catalysed reaction is guanosine + phosphate = alpha-D-ribose 1-phosphate + guanine. It catalyses the reaction inosine + phosphate = alpha-D-ribose 1-phosphate + hypoxanthine. The enzyme catalyses thymidine + phosphate = 2-deoxy-alpha-D-ribose 1-phosphate + thymine. It carries out the reaction uridine + phosphate = alpha-D-ribose 1-phosphate + uracil. The catalysed reaction is xanthosine + phosphate = alpha-D-ribose 1-phosphate + xanthine. Catalyzes the phosphorolysis of diverse nucleosides, yielding D-ribose 1-phosphate and the respective free bases. Can use uridine, adenosine, guanosine, cytidine, thymidine, inosine and xanthosine as substrates. Also catalyzes the reverse reactions. This Pseudomonas savastanoi pv. phaseolicola (strain 1448A / Race 6) (Pseudomonas syringae pv. phaseolicola (strain 1448A / Race 6)) protein is Pyrimidine/purine nucleoside phosphorylase.